The sequence spans 127 residues: PanD regulatory factor (127 aa).

The N-acetyltransferase domain maps to 1-127; the sequence is MKLTILRLEH…TAQHDGWEKR (127 aa). CoA contacts are provided by residues 66 to 68 and 72 to 79; these read LRV and TRRRGVGQ.

Belongs to the PanZ/PanM family. In terms of assembly, interacts with PanD in the presence of CoA. Monomer.

Controls both the activation and catalytic activity of PanD in a coenzyme A (CoA)-dependent fashion. Binding of CoA or a derivative to PanM leads to interaction with PanD, which promotes the processing and activation of pro-PanD, and subsequent substrate-mediated inhibition of the active form of PanD. Lacks acetyltransferase activity. The polypeptide is PanD regulatory factor (Salmonella typhimurium (strain LT2 / SGSC1412 / ATCC 700720)).